The sequence spans 321 residues: Electron transfer flavoprotein subunit alpha (321 aa).

14 residues coordinate FAD: Arg-211, Ser-236, Arg-237, Gln-250, Val-251, Ser-254, Gly-255, Ser-270, Ser-272, Gln-274, His-275, Asn-289, Asp-307, and Ile-308.

As to quaternary structure, heterodimer of an alpha and a beta subunit. Forms a ternary complex with trimethylamine dehydrogenase. Requires FAD as cofactor.

Heterodimeric electron transfer flavoprotein that accepts electrons from trimethylamine dehydrogenase. It transfers the electrons to the main respiratory chain via ETF-ubiquinone oxidoreductase (ETF dehydrogenase). This Methylophilus methylotrophus (Bacterium W3A1) protein is Electron transfer flavoprotein subunit alpha (etfA).